Reading from the N-terminus, the 100-residue chain is Urease subunit gamma (100 aa).

Belongs to the urease gamma subunit family. In terms of assembly, heterotrimer of UreA (gamma), UreB (beta) and UreC (alpha) subunits. Three heterotrimers associate to form the active enzyme.

It is found in the cytoplasm. The enzyme catalyses urea + 2 H2O + H(+) = hydrogencarbonate + 2 NH4(+). Its pathway is nitrogen metabolism; urea degradation; CO(2) and NH(3) from urea (urease route): step 1/1. The sequence is that of Urease subunit gamma from Prochlorococcus marinus (strain NATL2A).